The primary structure comprises 1079 residues: Translation initiation factor IF-2 (1079 aa).

Basic and acidic residues-rich tracts occupy residues valine 52 to asparagine 65, arginine 75 to glutamate 90, and alanine 102 to glutamine 134. The interval valine 52–alanine 488 is disordered. Low complexity predominate over residues alanine 150–threonine 184. Over residues valine 185–alanine 194 the composition is skewed to basic and acidic residues. Residues alanine 276 to glutamine 291 are compositionally biased toward low complexity. Residues glycine 306 to glycine 327 show a composition bias toward basic and acidic residues. Composition is skewed to low complexity over residues glutamate 348–proline 370 and proline 380–proline 398. Residues proline 419–glycine 429 show a composition bias toward gly residues. Over residues proline 461–arginine 471 the composition is skewed to basic and acidic residues. Over residues proline 473–lysine 482 the composition is skewed to basic residues. Positions threonine 578–glutamate 745 constitute a tr-type G domain. The G1 stretch occupies residues glycine 587 to threonine 594. A GTP-binding site is contributed by glycine 587–threonine 594. Residues glycine 612–histidine 616 form a G2 region. A G3 region spans residues aspartate 633–glycine 636. GTP-binding positions include aspartate 633 to histidine 637 and asparagine 687 to aspartate 690. The tract at residues asparagine 687–aspartate 690 is G4. The tract at residues serine 723–lysine 725 is G5.

It belongs to the TRAFAC class translation factor GTPase superfamily. Classic translation factor GTPase family. IF-2 subfamily.

It localises to the cytoplasm. In terms of biological role, one of the essential components for the initiation of protein synthesis. Protects formylmethionyl-tRNA from spontaneous hydrolysis and promotes its binding to the 30S ribosomal subunits. Also involved in the hydrolysis of GTP during the formation of the 70S ribosomal complex. In Nitratidesulfovibrio vulgaris (strain ATCC 29579 / DSM 644 / CCUG 34227 / NCIMB 8303 / VKM B-1760 / Hildenborough) (Desulfovibrio vulgaris), this protein is Translation initiation factor IF-2.